The sequence spans 93 residues: Small ribosomal subunit protein uS19c (93 aa).

The protein belongs to the universal ribosomal protein uS19 family.

It is found in the plastid. The protein resides in the chloroplast. Its function is as follows. Protein S19 forms a complex with S13 that binds strongly to the 16S ribosomal RNA. The polypeptide is Small ribosomal subunit protein uS19c (Oryza nivara (Indian wild rice)).